The sequence spans 60 residues: Large ribosomal subunit protein bL32 (60 aa).

Residues 1-16 (MAVPRRKTSPSRRGMR) are compositionally biased toward basic residues. The disordered stretch occupies residues 1–60 (MAVPRRKTSPSRRGMRRSADAIKKPTYAEDKDSGELRRPHHLDLKTGMYKGRQVLIKKES). The segment covering 17 to 44 (RSADAIKKPTYAEDKDSGELRRPHHLDL) has biased composition (basic and acidic residues).

The protein belongs to the bacterial ribosomal protein bL32 family.

This Rhodopseudomonas palustris (strain BisA53) protein is Large ribosomal subunit protein bL32.